A 627-amino-acid chain; its full sequence is Hemocyanin B chain (627 aa).

Positions 173, 177, and 204 each coordinate Cu cation. Residues Asn-312 and Asn-316 are each glycosylated (N-linked (GlcNAc...) asparagine). The Cu cation site is built by His-324, His-328, and His-364. A disulfide bridge links Cys-534 with Cys-582.

It belongs to the tyrosinase family. Hemocyanin subfamily. In terms of assembly, tarantula hemocyanin is a 24-chain polymer with seven different chains identified. Hemolymph.

It is found in the secreted. Its subcellular location is the extracellular space. Hemocyanins are copper-containing oxygen carriers occurring freely dissolved in the hemolymph of many mollusks and arthropods. This Aphonopelma sp. (American tarantula) protein is Hemocyanin B chain (HCB).